Consider the following 112-residue polypeptide: MSIVIAAKGLGLRSTPAKLNLVADLIRGKDVAVAAMYLKFCKKKAALLIDKVLKSAIANARANYGVDADNLYVKEVLVGKAFTLRRVQPRARGRACRISKRYGSVVVKLLER.

This sequence belongs to the universal ribosomal protein uL22 family. Part of the 50S ribosomal subunit.

Its function is as follows. This protein binds specifically to 23S rRNA; its binding is stimulated by other ribosomal proteins, e.g. L4, L17, and L20. It is important during the early stages of 50S assembly. It makes multiple contacts with different domains of the 23S rRNA in the assembled 50S subunit and ribosome. The globular domain of the protein is located near the polypeptide exit tunnel on the outside of the subunit, while an extended beta-hairpin is found that lines the wall of the exit tunnel in the center of the 70S ribosome. This chain is Large ribosomal subunit protein uL22, found in Anaplasma phagocytophilum (strain HZ).